The chain runs to 545 residues: Delta 8-(E)-sphingolipid desaturase (545 aa).

Residues 1 to 82 form the Cytochrome b5 heme-binding domain; sequence MASHTKDALL…MLAFQIGRIQ (82 aa). Heme contacts are provided by His42 and His65. A disordered region spans residues 97 to 124; it reads FRHYDENADSEEDDTSGQSQPPSPIFDA. Residues 227 to 247 form a helical membrane-spanning segment; the sequence is LGWYSVSAVFLGCFWHQLVFS. A Histidine box-1 motif is present at residues 249-253; the sequence is HDAGH. Residues 262–282 form a helical membrane-spanning segment; it reads VDSIIGILIADFLGGLSLGWW. The Histidine box-2 signature appears at 286–290; it reads HNVHH. A run of 2 helical transmembrane segments spans residues 382 to 402 and 408 to 428; these read IAGQ…CSIP and LSFL…ITLS. The short motif at 470–474 is the Histidine box-3 element; it reads QAIHH.

It belongs to the fatty acid desaturase type 1 family.

It is found in the membrane. The catalysed reaction is an N-acylsphing-4-enine + 2 Fe(II)-[cytochrome b5] + O2 + 2 H(+) = a (4E,8E)-4-sphinga-4,8-dienine ceramide + 2 Fe(III)-[cytochrome b5] + 2 H2O. The protein operates within lipid metabolism; sphingolipid metabolism. Functionally, delta(8)-fatty-acid desaturase which introduces a double bond at the 8-position in the long-chain base (LCB) of ceramides. Required for the formation of the di-unsaturated sphingoid base (E,E)-sphinga-4,8-dienine during glucosylceramide (GluCer) biosynthesis. Plays an important role in conidiation. The protein is Delta 8-(E)-sphingolipid desaturase of Emericella nidulans (strain FGSC A4 / ATCC 38163 / CBS 112.46 / NRRL 194 / M139) (Aspergillus nidulans).